We begin with the raw amino-acid sequence, 131 residues long: MIYGIGTDIIHIPRIEQLINKYSTKFINRILGKNEITIYQSLSIKQQTNFVAKRFAGKESVAKAIGTGITSSLLLRDIEILNNNLGKPIVYIPNAAKILLNNIKLTEYKIDISLSDDYPLAIAFTVISASI.

The Mg(2+) site is built by Asp-8 and Glu-59.

Belongs to the P-Pant transferase superfamily. AcpS family. The cofactor is Mg(2+).

Its subcellular location is the cytoplasm. It carries out the reaction apo-[ACP] + CoA = holo-[ACP] + adenosine 3',5'-bisphosphate + H(+). Functionally, transfers the 4'-phosphopantetheine moiety from coenzyme A to a Ser of acyl-carrier-protein. The sequence is that of Holo-[acyl-carrier-protein] synthase from Orientia tsutsugamushi (strain Ikeda) (Rickettsia tsutsugamushi).